Consider the following 210-residue polypeptide: ATP-dependent Clp protease proteolytic subunit (210 aa).

Ser114 functions as the Nucleophile in the catalytic mechanism. His139 is an active-site residue.

Belongs to the peptidase S14 family. In terms of assembly, fourteen ClpP subunits assemble into 2 heptameric rings which stack back to back to give a disk-like structure with a central cavity, resembling the structure of eukaryotic proteasomes.

The protein localises to the cytoplasm. It catalyses the reaction Hydrolysis of proteins to small peptides in the presence of ATP and magnesium. alpha-casein is the usual test substrate. In the absence of ATP, only oligopeptides shorter than five residues are hydrolyzed (such as succinyl-Leu-Tyr-|-NHMec, and Leu-Tyr-Leu-|-Tyr-Trp, in which cleavage of the -Tyr-|-Leu- and -Tyr-|-Trp bonds also occurs).. Cleaves peptides in various proteins in a process that requires ATP hydrolysis. Has a chymotrypsin-like activity. Plays a major role in the degradation of misfolded proteins. The protein is ATP-dependent Clp protease proteolytic subunit of Janthinobacterium sp. (strain Marseille) (Minibacterium massiliensis).